The following is a 343-amino-acid chain: Uroporphyrinogen decarboxylase (343 aa).

Substrate-binding positions include 23–27 (RQAGR), Asp-73, Tyr-151, Ser-206, and His-319.

The protein belongs to the uroporphyrinogen decarboxylase family. As to quaternary structure, homodimer.

The protein localises to the cytoplasm. It catalyses the reaction uroporphyrinogen III + 4 H(+) = coproporphyrinogen III + 4 CO2. It participates in porphyrin-containing compound metabolism; protoporphyrin-IX biosynthesis; coproporphyrinogen-III from 5-aminolevulinate: step 4/4. Functionally, catalyzes the decarboxylation of four acetate groups of uroporphyrinogen-III to yield coproporphyrinogen-III. The sequence is that of Uroporphyrinogen decarboxylase from Sulfurimonas denitrificans (strain ATCC 33889 / DSM 1251) (Thiomicrospira denitrificans (strain ATCC 33889 / DSM 1251)).